The following is a 271-amino-acid chain: Probable ribosomal RNA small subunit methyltransferase A (271 aa).

Asn-22, Leu-24, Gly-49, Glu-70, Asp-97, and Asn-112 together coordinate S-adenosyl-L-methionine.

The protein belongs to the class I-like SAM-binding methyltransferase superfamily. rRNA adenine N(6)-methyltransferase family. RsmA subfamily.

Its subcellular location is the cytoplasm. Specifically dimethylates two adjacent adenosines in the loop of a conserved hairpin near the 3'-end of 16S rRNA in the 30S particle. May play a critical role in biogenesis of 30S subunits. This is Probable ribosomal RNA small subunit methyltransferase A from Methanosphaera stadtmanae (strain ATCC 43021 / DSM 3091 / JCM 11832 / MCB-3).